A 352-amino-acid chain; its full sequence is MKIYFLLGTFLTFLLHTRICQGIKWLALSKTPLSLPLNQTQHCKQLEGLVSSQMQLCRSNLELMQTIIHAAKEVKKTCVKAFTDMRWNCSSIELAPTFHQDLERGTRESAFVHALSAAAISHTIARACTTGDIPGCSCAPIPGESPGPGYRWGGCADNLNYGILMGSKFSDAPMKMKKSGSQANKLMHLHNSEVGRQVLKASLEMKCKCHGVSGSCSIKTCWRGLQELREIALDLKTKYLSATKVVHRPMGTRKHLVPKDIDIRPVQETELIYLQSSPDYCLKNEKIGSHGTHERQCNKTSNGSDSCDLMCCGRGYNPYMDKVVERCLCKYHWCCYVTCKKCERTVERYVCK.

The first 22 residues, 1–22, serve as a signal peptide directing secretion; that stretch reads MKIYFLLGTFLTFLLHTRICQG. N-linked (GlcNAc...) asparagine glycans are attached at residues Asn38 and Asn88. 5 disulfides stabilise this stretch: Cys78-Cys89, Cys128-Cys136, Cys138-Cys155, Cys207-Cys221, and Cys209-Cys216. Ser213 carries the O-palmitoleoyl serine; by PORCN lipid modification. Residues Tyr273 and Tyr280 each carry the sulfotyrosine modification. 6 disulfides stabilise this stretch: Cys281-Cys312, Cys297-Cys307, Cys311-Cys351, Cys327-Cys342, Cys329-Cys339, and Cys334-Cys335. An N-linked (GlcNAc...) asparagine glycan is attached at Asn298.

Belongs to the Wnt family. In terms of processing, glycosylation is required for protein secretion. Post-translationally, palmitoleoylation is required for efficient binding to frizzled receptors. Depalmitoleoylation leads to Wnt signaling pathway inhibition. In terms of tissue distribution, in embryos, expressed in the neural tube, dorsal somite, mesenchymal cells within the dorsal fin, branchial arches and heart muscle, becoming expressed throughout the myocardium by the tadpole stage (stage 45). Prior to neural crest cell migration, expressed in a domain flanking the neural crest on the medial or neural (the opposite side to wnt11b). Weakly expressed in the developing pronephros from stage 25, with expression increasing from stages 30 to 35.

Its subcellular location is the secreted. It localises to the extracellular space. The protein localises to the extracellular matrix. Ligand for members of the frizzled family of seven transmembrane receptors. Shares much functionality with wnt11b. Signals through a non-canonical Wnt pathway to activate Jun-N-terminal kinase (JNK) to regulate gastrulation movements. Acts in a non-cell-autonomous manner to control neural crest migration, probably acting as an extracellular signal from surrounding tissue, but is not required for neural crest induction. Acts redundantly with wnt11b during pronephros induction. Regulates cardiac morphogenesis through the activation of JNK, but is not required for cardiac differentiation. Essential for dorsal fin development; required for an epithelial to mesenchymal transformation event prior to migration of cells into the fin, and ultimately for maintenance of fin structure. Mediates dorsal fin development through a non-canonical pathway mediated by Ca(2+). This Xenopus laevis (African clawed frog) protein is Protein Wnt-11.